We begin with the raw amino-acid sequence, 287 residues long: MLTRITLPSPAKLNLFLHIVGRRPDGYHELQTLFQFLDYGDELTFTLTPEQPGIRLAEPVPGVPDSDNLVIRAAKALAATTENTLPGVTIHIHKRLPMGGGLGGGSSNAATTLLAMNRLWELNLCEDQLAEIGLRLGADVPVFVRGHAAFGEGVGEKLTPTNPPEDWFVVLKPECNISTGKIFSAEGLTRDTPKIKIRPAFEGDASRYRNDCEDVVRKLYPEVNQSLEWLSQFGPARLTGTGACIFGRFPTESAARIIWESKPSGITGFVAKGVNHSPLHKKLTELK.

The active site involves K12. 97–107 (PMGGGLGGGSS) provides a ligand contact to ATP. D139 is an active-site residue.

Belongs to the GHMP kinase family. IspE subfamily.

The enzyme catalyses 4-CDP-2-C-methyl-D-erythritol + ATP = 4-CDP-2-C-methyl-D-erythritol 2-phosphate + ADP + H(+). The protein operates within isoprenoid biosynthesis; isopentenyl diphosphate biosynthesis via DXP pathway; isopentenyl diphosphate from 1-deoxy-D-xylulose 5-phosphate: step 3/6. In terms of biological role, catalyzes the phosphorylation of the position 2 hydroxy group of 4-diphosphocytidyl-2C-methyl-D-erythritol. The polypeptide is 4-diphosphocytidyl-2-C-methyl-D-erythritol kinase (Marinobacter nauticus (strain ATCC 700491 / DSM 11845 / VT8) (Marinobacter aquaeolei)).